A 478-amino-acid polypeptide reads, in one-letter code: Adenosylhomocysteinase (478 aa).

Substrate is bound by residues T57, D139, and E201. 202–204 (TTT) lines the NAD(+) pocket. Substrate contacts are provided by K231 and D235. Residues N236, 265–270 (GYGDVG), E288, N323, 344–346 (IGH), and N392 contribute to the NAD(+) site.

Belongs to the adenosylhomocysteinase family. Requires NAD(+) as cofactor.

Its subcellular location is the cytoplasm. The enzyme catalyses S-adenosyl-L-homocysteine + H2O = L-homocysteine + adenosine. The protein operates within amino-acid biosynthesis; L-homocysteine biosynthesis; L-homocysteine from S-adenosyl-L-homocysteine: step 1/1. Functionally, may play a key role in the regulation of the intracellular concentration of adenosylhomocysteine. In Corynebacterium glutamicum (strain R), this protein is Adenosylhomocysteinase.